Here is a 256-residue protein sequence, read N- to C-terminus: Alcohol dehydrogenase (256 aa).

12–35 is a binding site for NAD(+); that stretch reads FVAGLGGIGLDTSREIVKAGPKNL. S140 lines the substrate pocket. Residue Y153 is the Proton acceptor of the active site.

Belongs to the short-chain dehydrogenases/reductases (SDR) family. Homodimer.

The catalysed reaction is a primary alcohol + NAD(+) = an aldehyde + NADH + H(+). The enzyme catalyses a secondary alcohol + NAD(+) = a ketone + NADH + H(+). This is Alcohol dehydrogenase (Adh) from Zaprionus tuberculatus (Vinegar fly).